A 75-amino-acid polypeptide reads, in one-letter code: F1845 fimbrial adhesin operon regulatory protein DaaF (75 aa).

Functionally, may have a possible regulatory function on the expression of the other daa genes. The sequence is that of F1845 fimbrial adhesin operon regulatory protein DaaF (daaF) from Escherichia coli.